Reading from the N-terminus, the 324-residue chain is D-alanine--D-alanine ligase (324 aa).

The ATP-grasp domain occupies 112 to 312 (KAVLAAAGVT…FDQLVLWIVE (201 aa)). Position 139-193 (139-193 (LQPPYVVKPNAEGSSVGVFIIKEGANRPPEEVGAPSWTFGEEVMVEPYIQGMELA)) interacts with ATP. Asp-265, Glu-279, and Asn-281 together coordinate Mg(2+).

The protein belongs to the D-alanine--D-alanine ligase family. Mg(2+) is required as a cofactor. The cofactor is Mn(2+).

The protein localises to the cytoplasm. It carries out the reaction 2 D-alanine + ATP = D-alanyl-D-alanine + ADP + phosphate + H(+). The protein operates within cell wall biogenesis; peptidoglycan biosynthesis. Its function is as follows. Cell wall formation. This chain is D-alanine--D-alanine ligase, found in Caulobacter vibrioides (strain ATCC 19089 / CIP 103742 / CB 15) (Caulobacter crescentus).